The primary structure comprises 78 residues: Sec-independent protein translocase protein TatA (78 aa).

Residues 1–21 (MGGISIWQLLIIAVIVVLLFG) traverse the membrane as a helical segment. Residues 47–59 (ESEKKDADFEPKS) are compositionally biased toward basic and acidic residues. The disordered stretch occupies residues 47–78 (ESEKKDADFEPKSLEQQSKQAATESKKDKEQA). The span at 60-69 (LEQQSKQAAT) shows a compositional bias: polar residues.

Belongs to the TatA/E family. The Tat system comprises two distinct complexes: a TatABC complex, containing multiple copies of TatA, TatB and TatC subunits, and a separate TatA complex, containing only TatA subunits. Substrates initially bind to the TatABC complex, which probably triggers association of the separate TatA complex to form the active translocon.

The protein localises to the cell inner membrane. Part of the twin-arginine translocation (Tat) system that transports large folded proteins containing a characteristic twin-arginine motif in their signal peptide across membranes. TatA could form the protein-conducting channel of the Tat system. This Vibrio vulnificus (strain CMCP6) protein is Sec-independent protein translocase protein TatA.